Consider the following 161-residue polypeptide: Phosphopantetheine adenylyltransferase (161 aa).

Thr10 contacts substrate. ATP contacts are provided by residues 10 to 11 (TF) and His18. Residues Lys42, Met74, and Arg88 each coordinate substrate. Residues 89–91 (GLR), Glu99, and 124–130 (WSFISSS) contribute to the ATP site.

Belongs to the bacterial CoaD family. As to quaternary structure, homohexamer. The cofactor is Mg(2+).

It localises to the cytoplasm. It catalyses the reaction (R)-4'-phosphopantetheine + ATP + H(+) = 3'-dephospho-CoA + diphosphate. It functions in the pathway cofactor biosynthesis; coenzyme A biosynthesis; CoA from (R)-pantothenate: step 4/5. Its function is as follows. Reversibly transfers an adenylyl group from ATP to 4'-phosphopantetheine, yielding dephospho-CoA (dPCoA) and pyrophosphate. The protein is Phosphopantetheine adenylyltransferase of Edwardsiella ictaluri (strain 93-146).